The chain runs to 77 residues: Large ribosomal subunit protein bL28 (77 aa).

The interval 1–26 (MARVCKVTGKRPMSGNNVSHANNKTK) is disordered.

This sequence belongs to the bacterial ribosomal protein bL28 family.

This chain is Large ribosomal subunit protein bL28, found in Neisseria gonorrhoeae (strain ATCC 700825 / FA 1090).